The chain runs to 119 residues: Ribonuclease P protein component (119 aa).

The protein belongs to the RnpA family. As to quaternary structure, consists of a catalytic RNA component (M1 or rnpB) and a protein subunit.

It carries out the reaction Endonucleolytic cleavage of RNA, removing 5'-extranucleotides from tRNA precursor.. Its function is as follows. RNaseP catalyzes the removal of the 5'-leader sequence from pre-tRNA to produce the mature 5'-terminus. It can also cleave other RNA substrates such as 4.5S RNA. The protein component plays an auxiliary but essential role in vivo by binding to the 5'-leader sequence and broadening the substrate specificity of the ribozyme. The protein is Ribonuclease P protein component of Salmonella schwarzengrund (strain CVM19633).